The following is a 335-amino-acid chain: Glucokinase (335 aa).

11 to 16 (ADIGGT) contributes to the ATP binding site.

Belongs to the bacterial glucokinase family.

The protein resides in the cytoplasm. The catalysed reaction is D-glucose + ATP = D-glucose 6-phosphate + ADP + H(+). This is Glucokinase from Xanthomonas campestris pv. campestris (strain B100).